The primary structure comprises 884 residues: Probable leucine-rich repeat receptor-like protein kinase At2g28990 (884 aa).

A signal peptide spans 1–19 (MKIHLLLAMIGTFVVIIGA). The Extracellular portion of the chain corresponds to 20-508 (QDQEGFISLD…TEKKNKFLLP (489 aa)). 13 N-linked (GlcNAc...) asparagine glycosylation sites follow: N70, N177, N217, N231, N251, N284, N298, N334, N418, N427, N438, N459, and N464. 3 LRR repeats span residues 404-427 (SPTI…ILQN), 428-451 (FTQL…FLAN), and 452-476 (MKTL…LLDK). Residues 509–529 (VIASAASLVIVVVVVALFFVF) form a helical membrane-spanning segment. At 530–884 (RKKKASPSNL…IYNEVIPQAR (355 aa)) the chain is on the cytoplasmic side. Positions 535-559 (SPSNLHAPPSMPVSNPGHNSQSESS) are disordered. Residues 546-559 (PVSNPGHNSQSESS) are compositionally biased toward polar residues. Residue T568 is modified to Phosphothreonine. In terms of domain architecture, Protein kinase spans 577 to 850 (NNFDKALGEG…RVVNELKECL (274 aa)). ATP is bound by residues 583–591 (LGEGGFGVV) and K605. Y650 is modified (phosphotyrosine). Residue D702 is the Proton acceptor of the active site. Phosphoserine is present on S736. Residues T737 and T742 each carry the phosphothreonine modification. Phosphotyrosine is present on Y750.

It belongs to the protein kinase superfamily. Ser/Thr protein kinase family. As to quaternary structure, binds to the ammonium transporter AMT1-1.

It localises to the membrane. It carries out the reaction L-seryl-[protein] + ATP = O-phospho-L-seryl-[protein] + ADP + H(+). The enzyme catalyses L-threonyl-[protein] + ATP = O-phospho-L-threonyl-[protein] + ADP + H(+). The sequence is that of Probable leucine-rich repeat receptor-like protein kinase At2g28990 from Arabidopsis thaliana (Mouse-ear cress).